The following is a 529-amino-acid chain: Peptide chain release factor 3 (529 aa).

A tr-type G domain is found at 11–280 (SKRRTFAIIS…GLTEWAPAPK (270 aa)). GTP is bound by residues 20 to 27 (SHPDAGKT), 88 to 92 (DTPGH), and 142 to 145 (NKLD).

This sequence belongs to the TRAFAC class translation factor GTPase superfamily. Classic translation factor GTPase family. PrfC subfamily.

Its subcellular location is the cytoplasm. In terms of biological role, increases the formation of ribosomal termination complexes and stimulates activities of RF-1 and RF-2. It binds guanine nucleotides and has strong preference for UGA stop codons. It may interact directly with the ribosome. The stimulation of RF-1 and RF-2 is significantly reduced by GTP and GDP, but not by GMP. This Vibrio campbellii (strain ATCC BAA-1116) protein is Peptide chain release factor 3.